Here is a 480-residue protein sequence, read N- to C-terminus: Alpha-glucosidase (480 aa).

Residue 4–70 coordinates NAD(+); it reads VKIGIIGAGS…ADLKFEKTMN (67 aa). D119 and N153 together coordinate substrate. Residue C174 participates in Mn(2+) binding. Catalysis depends on H175, which acts as the Proton donor. Mn(2+) is bound at residue H203. D260 acts as the Proton acceptor in catalysis.

It belongs to the glycosyl hydrolase 4 family. As to quaternary structure, homodimer. The cofactor is NAD(+). Mn(2+) serves as cofactor. Co(2+) is required as a cofactor. It depends on Ni(2+) as a cofactor.

The catalysed reaction is Hydrolysis of terminal, non-reducing (1-&gt;4)-linked alpha-D-glucose residues with release of alpha-D-glucose.. Its activity is regulated as follows. Inhibited by Hg(2+) ion and EDTA. Functionally, alpha-glycosidase with a very broad specificity. Hydrolyzes maltose and other small maltooligosaccharides but is inactive against the polymeric substrate starch. AglA is not specific with respect to the configuration at the C-4 position of its substrates because glycosidic derivatives of D-galactose are also hydrolyzed. Does not cleave beta-glycosidic bonds. The protein is Alpha-glucosidase (aglA) of Thermotoga maritima (strain ATCC 43589 / DSM 3109 / JCM 10099 / NBRC 100826 / MSB8).